The following is a 679-amino-acid chain: DNA-directed RNA polymerase subunit beta' (679 aa).

The Zn(2+) site is built by C69, C71, C87, and C90. Mg(2+) is bound by residues D489, D491, and D493.

It belongs to the RNA polymerase beta' chain family. RpoC1 subfamily. In plastids the minimal PEP RNA polymerase catalytic core is composed of four subunits: alpha, beta, beta', and beta''. When a (nuclear-encoded) sigma factor is associated with the core the holoenzyme is formed, which can initiate transcription. Mg(2+) is required as a cofactor. It depends on Zn(2+) as a cofactor.

It is found in the plastid. It localises to the chloroplast. The enzyme catalyses RNA(n) + a ribonucleoside 5'-triphosphate = RNA(n+1) + diphosphate. In terms of biological role, DNA-dependent RNA polymerase catalyzes the transcription of DNA into RNA using the four ribonucleoside triphosphates as substrates. The polypeptide is DNA-directed RNA polymerase subunit beta' (Phalaenopsis aphrodite subsp. formosana (Moth orchid)).